We begin with the raw amino-acid sequence, 417 residues long: Glutamyl-tRNA reductase (417 aa).

Residues 48 to 51 (TCNR), Ser-100, 105 to 107 (EDQ), and Gln-111 contribute to the substrate site. Catalysis depends on Cys-49, which acts as the Nucleophile. 180-185 (GAGETG) serves as a coordination point for NADP(+).

The protein belongs to the glutamyl-tRNA reductase family. In terms of assembly, homodimer.

The enzyme catalyses (S)-4-amino-5-oxopentanoate + tRNA(Glu) + NADP(+) = L-glutamyl-tRNA(Glu) + NADPH + H(+). It functions in the pathway porphyrin-containing compound metabolism; protoporphyrin-IX biosynthesis; 5-aminolevulinate from L-glutamyl-tRNA(Glu): step 1/2. Functionally, catalyzes the NADPH-dependent reduction of glutamyl-tRNA(Glu) to glutamate 1-semialdehyde (GSA). The chain is Glutamyl-tRNA reductase from Methanothrix thermoacetophila (strain DSM 6194 / JCM 14653 / NBRC 101360 / PT) (Methanosaeta thermophila).